The sequence spans 585 residues: Protein cereblon (585 aa).

Disordered regions lie at residues Met-1–Ser-109 and Phe-156–Asp-195. A compositionally biased stretch (polar residues) spans Gln-80 to Ser-95. The segment covering Gln-158–Glu-167 has biased composition (basic and acidic residues). The span at Val-178 to Pro-189 shows a compositional bias: pro residues. The region spanning His-225–Thr-451 is the Lon N-terminal domain. In terms of domain architecture, CULT spans Glu-450–Lys-559. 4 residues coordinate Zn(2+): Cys-455, Cys-458, Cys-524, and Cys-527.

This sequence belongs to the CRBN family. In terms of assembly, likely a component of a DCX (DDB1-CUL4-X-box) protein ligase complex. May interact with pic/DDB1. In terms of processing, ubiquitinated. Expressed in the fat body (at protein level).

Its subcellular location is the nucleus. It functions in the pathway protein modification; protein ubiquitination. In terms of biological role, substrate recognition component of a DCX (DDB1-CUL4-X-box) E3 protein ligase complex that mediates the ubiquitination and subsequent proteasomal degradation of target proteins. Has an essential role in mediating growth by negatively regulating insulin signaling. It also has a role in maintaining presynaptic function in the neuromuscular junction synapses of third-instar larvae. This chain is Protein cereblon, found in Drosophila melanogaster (Fruit fly).